The chain runs to 510 residues: NAD(P)H-quinone oxidoreductase subunit 2 A, chloroplastic (510 aa).

Helical transmembrane passes span 31-51 (FIFP…IDLT), 59-79 (WFYF…LFRW), 99-119 (IFQF…VEYI), 124-144 (MAIT…MFLC), 149-169 (LITI…LSGY), 184-204 (LLMG…LYGL), 229-249 (ISIA…LAPF), 261-281 (PTPV…ALAT), 295-315 (WHLL…LLAI), 323-343 (MLAY…IVGD), 354-374 (YMLF…LFGL), 395-415 (ALSL…AGFF), 418-438 (LYLF…IGLL), and 484-504 (MTVC…ILAI).

This sequence belongs to the complex I subunit 2 family. NDH is composed of at least 16 different subunits, 5 of which are encoded in the nucleus.

Its subcellular location is the plastid. It is found in the chloroplast thylakoid membrane. The catalysed reaction is a plastoquinone + NADH + (n+1) H(+)(in) = a plastoquinol + NAD(+) + n H(+)(out). It carries out the reaction a plastoquinone + NADPH + (n+1) H(+)(in) = a plastoquinol + NADP(+) + n H(+)(out). Functionally, NDH shuttles electrons from NAD(P)H:plastoquinone, via FMN and iron-sulfur (Fe-S) centers, to quinones in the photosynthetic chain and possibly in a chloroplast respiratory chain. The immediate electron acceptor for the enzyme in this species is believed to be plastoquinone. Couples the redox reaction to proton translocation, and thus conserves the redox energy in a proton gradient. This is NAD(P)H-quinone oxidoreductase subunit 2 A, chloroplastic from Saccharum hybrid (Sugarcane).